The sequence spans 320 residues: Acetyl-coenzyme A carboxylase carboxyl transferase subunit alpha (320 aa).

One can recognise a CoA carboxyltransferase C-terminal domain in the interval lysine 41–glutamate 295.

Belongs to the AccA family. In terms of assembly, acetyl-CoA carboxylase is a heterohexamer composed of biotin carboxyl carrier protein (AccB), biotin carboxylase (AccC) and two subunits each of ACCase subunit alpha (AccA) and ACCase subunit beta (AccD).

The protein localises to the cytoplasm. It carries out the reaction N(6)-carboxybiotinyl-L-lysyl-[protein] + acetyl-CoA = N(6)-biotinyl-L-lysyl-[protein] + malonyl-CoA. It participates in lipid metabolism; malonyl-CoA biosynthesis; malonyl-CoA from acetyl-CoA: step 1/1. Component of the acetyl coenzyme A carboxylase (ACC) complex. First, biotin carboxylase catalyzes the carboxylation of biotin on its carrier protein (BCCP) and then the CO(2) group is transferred by the carboxyltransferase to acetyl-CoA to form malonyl-CoA. The protein is Acetyl-coenzyme A carboxylase carboxyl transferase subunit alpha of Rhodopseudomonas palustris (strain ATCC BAA-98 / CGA009).